Here is a 138-residue protein sequence, read N- to C-terminus: Large ribosomal subunit protein uL16 (138 aa).

The segment covering 1–13 (MLQPKRRKYRKEQ) has biased composition (basic residues). A disordered region spans residues 1 to 24 (MLQPKRRKYRKEQKGRNTGKATRG).

This sequence belongs to the universal ribosomal protein uL16 family. As to quaternary structure, part of the 50S ribosomal subunit.

In terms of biological role, binds 23S rRNA and is also seen to make contacts with the A and possibly P site tRNAs. This Burkholderia multivorans (strain ATCC 17616 / 249) protein is Large ribosomal subunit protein uL16.